Consider the following 93-residue polypeptide: Small ribosomal subunit protein uS19 (93 aa).

This sequence belongs to the universal ribosomal protein uS19 family.

Functionally, protein S19 forms a complex with S13 that binds strongly to the 16S ribosomal RNA. This chain is Small ribosomal subunit protein uS19, found in Paenarthrobacter aurescens (strain TC1).